The sequence spans 659 residues: Threonine--tRNA ligase (659 aa).

In terms of domain architecture, TGS spans 1–61 (MSAVPELRIT…ADGDVVEEIR (61 aa)). Residues 260 to 555 (DHRKLGVELD…LLEHYAGAFP (296 aa)) are catalytic. 3 residues coordinate Zn(2+): cysteine 353, histidine 404, and histidine 532.

It belongs to the class-II aminoacyl-tRNA synthetase family. As to quaternary structure, homodimer. Zn(2+) is required as a cofactor.

It localises to the cytoplasm. The enzyme catalyses tRNA(Thr) + L-threonine + ATP = L-threonyl-tRNA(Thr) + AMP + diphosphate + H(+). In terms of biological role, catalyzes the attachment of threonine to tRNA(Thr) in a two-step reaction: L-threonine is first activated by ATP to form Thr-AMP and then transferred to the acceptor end of tRNA(Thr). Also edits incorrectly charged L-seryl-tRNA(Thr). The sequence is that of Threonine--tRNA ligase from Thermobifida fusca (strain YX).